Here is a 452-residue protein sequence, read N- to C-terminus: Tubulin beta-2 chain (452 aa).

GTP-binding residues include Q11, E74, S143, V147, T148, G149, N209, and N231. E74 serves as a coordination point for Mg(2+). The tract at residues 431 to 452 (QEATADDEAEFEEEGEVEGEYD) is disordered. Acidic residues predominate over residues 434–452 (TADDEAEFEEEGEVEGEYD).

It belongs to the tubulin family. In terms of assembly, dimer of alpha and beta chains. A typical microtubule is a hollow water-filled tube with an outer diameter of 25 nm and an inner diameter of 15 nM. Alpha-beta heterodimers associate head-to-tail to form protofilaments running lengthwise along the microtubule wall with the beta-tubulin subunit facing the microtubule plus end conferring a structural polarity. Microtubules usually have 13 protofilaments but different protofilament numbers can be found in some organisms and specialized cells. Requires Mg(2+) as cofactor.

The protein resides in the cytoplasm. The protein localises to the cytoskeleton. In terms of biological role, tubulin is the major constituent of microtubules, a cylinder consisting of laterally associated linear protofilaments composed of alpha- and beta-tubulin heterodimers. Microtubules grow by the addition of GTP-tubulin dimers to the microtubule end, where a stabilizing cap forms. Below the cap, tubulin dimers are in GDP-bound state, owing to GTPase activity of alpha-tubulin. This is Tubulin beta-2 chain from Homarus americanus (American lobster).